The primary structure comprises 777 residues: Intraflagellar transport protein 80 homolog (777 aa).

WD repeat units follow at residues 12–50 (KHQE…TSLI), 104–143 (AHCG…RSTL), 145–185 (QQGI…LQWK), 186–225 (AHDG…LYGS), 227–265 (PHEH…YALE), 267–306 (PNTG…WEWK), and 504–542 (KLGT…YVDR). The tract at residues 758–777 (TKERDRSSSGQSSKNTGLKP) is disordered. The segment covering 765 to 777 (SSGQSSKNTGLKP) has biased composition (polar residues).

As to quaternary structure, component of the IFT complex B, at least composed of IFT20, IFT22, IFT25, IFT27, IFT46, IFT52, TRAF3IP1/IFT54, IFT57, IFT74, IFT80, IFT81, and IFT88. Interacts with IFT88. Interacts with IFT57 and IFT70B.

It localises to the cytoplasm. The protein resides in the cytoskeleton. The protein localises to the cilium basal body. Its subcellular location is the cilium axoneme. Component of the intraflagellar transport (IFT) complex B, which is essential for the development and maintenance of motile and sensory cilia. In Rattus norvegicus (Rat), this protein is Intraflagellar transport protein 80 homolog (Ift80).